The sequence spans 348 residues: Holliday junction branch migration complex subunit RuvB (348 aa).

Residues 1–182 form a large ATPase domain (RuvB-L) region; that stretch reads MRIELLNTPA…FGINSRFDYY (182 aa). Residues isoleucine 21, arginine 22, glycine 63, lysine 66, threonine 67, threonine 68, 129-131, arginine 172, tyrosine 182, and arginine 219 each bind ATP; that span reads EDF. Threonine 67 contacts Mg(2+). The tract at residues 183-253 is small ATPAse domain (RuvB-S); that stretch reads SADLLEKIII…IAMTTLDCLE (71 aa). The segment at 256 to 348 is head domain (RuvB-H); it reads EEGLDDMDKK…EFPLEDDQRQ (93 aa). Arginine 311 and arginine 316 together coordinate DNA.

This sequence belongs to the RuvB family. In terms of assembly, homohexamer. Forms an RuvA(8)-RuvB(12)-Holliday junction (HJ) complex. HJ DNA is sandwiched between 2 RuvA tetramers; dsDNA enters through RuvA and exits via RuvB. An RuvB hexamer assembles on each DNA strand where it exits the tetramer. Each RuvB hexamer is contacted by two RuvA subunits (via domain III) on 2 adjacent RuvB subunits; this complex drives branch migration. In the full resolvosome a probable DNA-RuvA(4)-RuvB(12)-RuvC(2) complex forms which resolves the HJ.

The protein resides in the cytoplasm. The catalysed reaction is ATP + H2O = ADP + phosphate + H(+). The RuvA-RuvB-RuvC complex processes Holliday junction (HJ) DNA during genetic recombination and DNA repair, while the RuvA-RuvB complex plays an important role in the rescue of blocked DNA replication forks via replication fork reversal (RFR). RuvA specifically binds to HJ cruciform DNA, conferring on it an open structure. The RuvB hexamer acts as an ATP-dependent pump, pulling dsDNA into and through the RuvAB complex. RuvB forms 2 homohexamers on either side of HJ DNA bound by 1 or 2 RuvA tetramers; 4 subunits per hexamer contact DNA at a time. Coordinated motions by a converter formed by DNA-disengaged RuvB subunits stimulates ATP hydrolysis and nucleotide exchange. Immobilization of the converter enables RuvB to convert the ATP-contained energy into a lever motion, pulling 2 nucleotides of DNA out of the RuvA tetramer per ATP hydrolyzed, thus driving DNA branch migration. The RuvB motors rotate together with the DNA substrate, which together with the progressing nucleotide cycle form the mechanistic basis for DNA recombination by continuous HJ branch migration. Branch migration allows RuvC to scan DNA until it finds its consensus sequence, where it cleaves and resolves cruciform DNA. The sequence is that of Holliday junction branch migration complex subunit RuvB from Chlorobium limicola (strain DSM 245 / NBRC 103803 / 6330).